The chain runs to 616 residues: Chaperone protein HtpG (616 aa).

The tract at residues 1–333 is a; substrate-binding; sequence MKKQFDTEVN…CQDLPLNVSR (333 aa). A b region spans residues 334–542; that stretch reads EILQQNKILS…SNDPTYQMQK (209 aa). Residues 543–616 form a c region; that stretch reads IMLSMGQEVK…INEFLEKDLL (74 aa).

This sequence belongs to the heat shock protein 90 family. As to quaternary structure, homodimer.

The protein resides in the cytoplasm. In terms of biological role, molecular chaperone. Has ATPase activity. This Borreliella afzelii (strain PKo) (Borrelia afzelii) protein is Chaperone protein HtpG.